Consider the following 237-residue polypeptide: Ribosomally synthesized cyclic peptide ustiloxin B precursosr (237 aa).

The N-terminal stretch at 1–19 (MKLILTLLVSGLCALAAPA) is a signal peptide. Propeptides lie at residues 20–22 (AKR) and 234–237 (HGGH).

In terms of processing, ustA is processed by the subtilisin-like endoprotease kex2 that is outside the ustiloxin B gene cluster, at the C-terminal side of Arg-Lys, after transfer to Golgi apparatus through the endoplasmic reticulum (ER). Cleavage by kex2 generates 16 peptides YAIG-I to YAIG-XVI. To process the precursor peptide further, at least two peptidases are necessary to cleave the N-terminal and C-terminal sides of the Tyr-Ala-Ile-Gly core peptide which serves as backbone for the synthesis of ustiloxin B, through cyclization and modification of the tyrosine. One of the two peptidases must be the serine peptidase ustP; and the other pepdidase is probably ustH. Macrocyclization of the core peptide derived from ustA requires the tyrosinase ustQ, as well as the homologous oxidases ustYa and ustYb, and leads to the production of the first cyclization product N-desmethylustiloxin F. For the formation of N-desmethylustiloxin F, three oxidation steps are required, hydroxylation at the benzylic position, hydroxylation at either the aromatic ring of Tyr or beta-position of Ile, and oxidative cyclization. UstQ may catalyze the oxidation of a phenol moiety, whereas the ustYa and ustYb are most likely responsible for the remaining two-step oxidations. N-desmethylustiloxin F is then methylated by ustM to yield ustiloxin F which in turn substrate of the cytochrome P450 monooxygenase ustC which catalyzes the formation of S-deoxyustiloxin H. The flavoprotein monooxygenases ustF1 and ustF2 then participate in the modification of the side chain of S-deoxyustiloxin H, leading to the synthesis of an oxime intermediate, via ustiloxin H. Finally, carboxylative dehydration performed by the cysteine desulfurase-like protein ustD yields ustiloxin B.

It functions in the pathway mycotoxin biosynthesis. Ribosomally synthesized cyclic peptide ustiloxin B precursor: Part of the gene cluster that mediates the biosynthesis of the secondary metabolite ustiloxin B, an antimitotic tetrapeptide. The ustA translated product contains a 16-fold repeated peptide embedding the tetrapeptide Tyr-Ala-Ile-Gly, that is converted into the cyclic moiety of ustiloxin B. This is Ribosomally synthesized cyclic peptide ustiloxin B precursosr from Aspergillus flavus (strain ATCC 200026 / FGSC A1120 / IAM 13836 / NRRL 3357 / JCM 12722 / SRRC 167).